Here is a 180-residue protein sequence, read N- to C-terminus: Nucleoside triphosphate/diphosphate phosphatase (180 aa).

The active-site Proton donor is R26. Mg(2+) contacts are provided by N90, D106, D108, D110, D123, and E126.

This sequence belongs to the Ntdp family. Mg(2+) is required as a cofactor.

The catalysed reaction is a ribonucleoside 5'-triphosphate + H2O = a ribonucleoside 5'-diphosphate + phosphate + H(+). It catalyses the reaction a ribonucleoside 5'-diphosphate + H2O = a ribonucleoside 5'-phosphate + phosphate + H(+). In terms of biological role, has nucleoside phosphatase activity towards nucleoside triphosphates and nucleoside diphosphates. This chain is Nucleoside triphosphate/diphosphate phosphatase, found in Staphylococcus aureus (strain Mu3 / ATCC 700698).